The sequence spans 305 residues: Ribonuclease BN (305 aa).

Residues His-64, His-66, Asp-68, His-69, His-141, Asp-212, and His-270 each coordinate Zn(2+). The active-site Proton acceptor is Asp-68.

The protein belongs to the RNase Z family. RNase BN subfamily. As to quaternary structure, homodimer. Zn(2+) serves as cofactor.

Zinc phosphodiesterase, which has both exoribonuclease and endoribonuclease activities. In Escherichia coli O127:H6 (strain E2348/69 / EPEC), this protein is Ribonuclease BN.